A 486-amino-acid polypeptide reads, in one-letter code: Intermediate cleaving peptidase 55 (486 aa).

The transit peptide at 1–19 (MSGYIRTLFIRNRFSNYRL) directs the protein to the mitochondrion. 5 residues coordinate Mn(2+): Asp-317, Asp-328, His-407, Glu-434, and Glu-457.

This sequence belongs to the peptidase M24B family. Mn(2+) serves as cofactor.

Its subcellular location is the mitochondrion inner membrane. It catalyses the reaction The enzyme cleaves the 36-Pro-Pro-37 bond of cysteine desulfurase (EC 2.8.1.7) removing three amino acid residues (Tyr-Ser-Pro) from the N-terminus after cleavage by mitochondrial processing peptidase.. Its function is as follows. Aminopeptidase which cleaves preprotein intermediates that carry destabilizing N-ter amino acid residues after the mitochondrial processing peptidase (MPP) cleavage site and is thus critical for stabilization of the mitochondrial proteome. The chain is Intermediate cleaving peptidase 55 (icp55) from Schizosaccharomyces pombe (strain 972 / ATCC 24843) (Fission yeast).